Reading from the N-terminus, the 1376-residue chain is Phospholipid-transporting ATPase DRS2 (1376 aa).

The segment covering 1-10 has biased composition (gly residues); sequence MAGRPTGGPQ. 2 disordered regions span residues 1–151 and 180–217; these read MAGR…AAAR and GYSE…PKRD. Over 1-306 the chain is Cytoplasmic; the sequence is MAGRPTGGPQ…QIPGLSPTNR (306 aa). The segment covering 40 to 50 has biased composition (basic and acidic residues); the sequence is DLMRTYTRDQE. Low complexity predominate over residues 85–96; sequence QSSSSNNNNNNN. Over residues 97–115 the composition is skewed to polar residues; that stretch reads VSAPYSRSGRQYSQTSDLG. Positions 191 to 203 are enriched in gly residues; that stretch reads PGGGGGGAGGGGH. A helical transmembrane segment spans residues 307 to 327; that stretch reads FTTIIPLVAVLMVSAGKELVE. Residues 328 to 509 are Extracellular-facing; sequence DYRRKQADAA…KVEKKLNTLV (182 aa). Asparagine 339, asparagine 433, and asparagine 490 each carry an N-linked (GlcNAc...) asparagine glycan. A helical transmembrane segment spans residues 510 to 530; that stretch reads LLLVGILMVLSIISTVGDLII. At 531 to 559 the chain is on the cytoplasmic side; it reads RRVEGDAISYLMLDQPDTAGKIAETFFKD. Residues 560–580 traverse the membrane as a helical segment; it reads MVTYWVLFSSLVPISLFVTVE. The Extracellular segment spans residues 581 to 1107; it reads MVKYWHGILI…VFSGAVIYES (527 aa). Aspartate 625 functions as the 4-aspartylphosphate intermediate in the catalytic mechanism. Aspartate 625, lysine 626, and threonine 627 together coordinate ATP. Aspartate 625 contacts Mg(2+). Threonine 627 lines the Mg(2+) pocket. The N-linked (GlcNAc...) asparagine glycan is linked to asparagine 679. Positions 720 and 761 each coordinate ATP. Asparagine 762 carries N-linked (GlcNAc...) asparagine glycosylation. 10 residues coordinate ATP: serine 763, lysine 766, lysine 784, arginine 817, threonine 818, threonine 898, glycine 899, aspartate 900, arginine 991, and lysine 997. Aspartate 1018 is a Mg(2+) binding site. Residues asparagine 1021 and aspartate 1022 each coordinate ATP. Residue aspartate 1022 participates in Mg(2+) binding. The N-linked (GlcNAc...) asparagine glycan is linked to asparagine 1083. A helical membrane pass occupies residues 1108 to 1128; sequence WTLTFYNVFYTVLPPLALGIL. The Cytoplasmic portion of the chain corresponds to 1129-1165; that stretch reads DQFISARLLDRYPQLYSMGQQNQFFRMKVFIEWLLNA. A helical transmembrane segment spans residues 1166–1186; sequence VYHSIILYVFGELIWHGDLIL. Residues 1187–1190 are Extracellular-facing; that stretch reads ENGQ. The helical transmembrane segment at 1191 to 1211 threads the bilayer; sequence IAGHWMWGTALYAPVLLTVLG. Lysine 1212 contributes to the a 1,2-diacyl-sn-glycero-3-phospho-(1D-myo-inositol 4-phosphate) binding site. The Cytoplasmic portion of the chain corresponds to 1212-1224; that stretch reads KAGLVTSNWTKYH. A helical transmembrane segment spans residues 1225 to 1245; the sequence is VIAIPGSMAIWWIFIAVYGTV. At 1246-1257 the chain is on the extracellular side; the sequence is APMIPFSPEFHG. A helical membrane pass occupies residues 1258–1278; it reads IVPKLYSSPIFWLQSFALAIL. The Cytoplasmic portion of the chain corresponds to 1279-1376; it reads CLLRDFAWKY…TSSRPQGQGT (98 aa). 5 residues coordinate a 1,2-diacyl-sn-glycero-3-phospho-(1D-myo-inositol 4-phosphate): arginine 1282, tryptophan 1286, lysine 1287, tyrosine 1298, and histidine 1299.

Belongs to the cation transport ATPase (P-type) (TC 3.A.3) family. Type IV subfamily. It depends on Mg(2+) as a cofactor.

Its subcellular location is the cell membrane. It is found in the golgi apparatus. It localises to the trans-Golgi network membrane. It carries out the reaction ATP + H2O + phospholipidSide 1 = ADP + phosphate + phospholipidSide 2.. It catalyses the reaction a 1,2-diacyl-sn-glycero-3-phospho-L-serine(out) + ATP + H2O = a 1,2-diacyl-sn-glycero-3-phospho-L-serine(in) + ADP + phosphate + H(+). The catalysed reaction is a 1,2-diacyl-sn-glycero-3-phosphoethanolamine(out) + ATP + H2O = a 1,2-diacyl-sn-glycero-3-phosphoethanolamine(in) + ADP + phosphate + H(+). Catalytic component of a P4-ATPase flippase complex which catalyzes the hydrolysis of ATP coupled to the transport of phosphatidylserine and small amounts of ethanolamine from the lumen to the cytosolic leaflet of the trans-Golgi network and cell membrane and ensures the maintenance of asymmetric distribution of phospholipids. Required for efficient vesicle transport during toxin secretion. This Verticillium dahliae (strain VdLs.17 / ATCC MYA-4575 / FGSC 10137) (Verticillium wilt) protein is Phospholipid-transporting ATPase DRS2 (DRS2).